We begin with the raw amino-acid sequence, 231 residues long: MNRLLSVFALGGAVLLAGCVAPTPKPNDPYYAPVLPRTPLPAAANNGSIYQAGFEQNLYSDRKAFRVGDIITITLNERTSASKNAGSQIAKTSKTDIGLTSLFGTTPNTNNPFGGGDLSLEAGYSGDRATKGDSKATQGNTLTGSITVTVAEVLPNGIIAVRGEKWLTLNTGEELVRIAGMIRADDIATDNTVPSTRVADARITYSGTGSFADASQPGWLDRFFISPLWPF.

Residues 1-18 (MNRLLSVFALGGAVLLAG) form the signal peptide. Cys-19 is lipidated: N-palmitoyl cysteine. Cys-19 is lipidated: S-diacylglycerol cysteine.

It belongs to the FlgH family. The basal body constitutes a major portion of the flagellar organelle and consists of four rings (L,P,S, and M) mounted on a central rod.

The protein resides in the cell outer membrane. It localises to the bacterial flagellum basal body. Functionally, assembles around the rod to form the L-ring and probably protects the motor/basal body from shearing forces during rotation. This is Flagellar L-ring protein from Pseudomonas putida (strain ATCC 700007 / DSM 6899 / JCM 31910 / BCRC 17059 / LMG 24140 / F1).